Reading from the N-terminus, the 115-residue chain is Cell division topological specificity factor (115 aa).

Residues T89–S115 are disordered.

This sequence belongs to the MinE family.

In terms of biological role, prevents the cell division inhibition by proteins MinC and MinD at internal division sites while permitting inhibition at polar sites. This ensures cell division at the proper site by restricting the formation of a division septum at the midpoint of the long axis of the cell. The sequence is that of Cell division topological specificity factor from Prochlorococcus marinus (strain NATL2A).